The following is a 275-amino-acid chain: 2,3,4,5-tetrahydropyridine-2,6-dicarboxylate N-succinyltransferase (275 aa).

Substrate contacts are provided by arginine 108 and aspartate 145.

The protein belongs to the transferase hexapeptide repeat family. Homotrimer.

Its subcellular location is the cytoplasm. The enzyme catalyses (S)-2,3,4,5-tetrahydrodipicolinate + succinyl-CoA + H2O = (S)-2-succinylamino-6-oxoheptanedioate + CoA. It functions in the pathway amino-acid biosynthesis; L-lysine biosynthesis via DAP pathway; LL-2,6-diaminopimelate from (S)-tetrahydrodipicolinate (succinylase route): step 1/3. This Jannaschia sp. (strain CCS1) protein is 2,3,4,5-tetrahydropyridine-2,6-dicarboxylate N-succinyltransferase.